Consider the following 928-residue polypeptide: Isoleucine--tRNA ligase (928 aa).

The 'HIGH' region signature appears at 57–67 (PFANGNIHMGH). Residue Glu-552 participates in L-isoleucyl-5'-AMP binding. Residues 593–597 (KMSKS) carry the 'KMSKS' region motif. Lys-596 contributes to the ATP binding site. Residues Cys-887, Cys-890, Cys-907, and Cys-910 each coordinate Zn(2+).

It belongs to the class-I aminoacyl-tRNA synthetase family. IleS type 1 subfamily. Monomer. Zn(2+) is required as a cofactor.

The protein resides in the cytoplasm. The catalysed reaction is tRNA(Ile) + L-isoleucine + ATP = L-isoleucyl-tRNA(Ile) + AMP + diphosphate. Functionally, catalyzes the attachment of isoleucine to tRNA(Ile). As IleRS can inadvertently accommodate and process structurally similar amino acids such as valine, to avoid such errors it has two additional distinct tRNA(Ile)-dependent editing activities. One activity is designated as 'pretransfer' editing and involves the hydrolysis of activated Val-AMP. The other activity is designated 'posttransfer' editing and involves deacylation of mischarged Val-tRNA(Ile). In Lacticaseibacillus paracasei (strain ATCC 334 / BCRC 17002 / CCUG 31169 / CIP 107868 / KCTC 3260 / NRRL B-441) (Lactobacillus paracasei), this protein is Isoleucine--tRNA ligase.